Consider the following 319-residue polypeptide: MRRAVVIGTGSALPRRQVSNAELARTVDTSDEWIVERTGIRNRYVAGEGETTSTLATEAARKAIEAAGIAPSDIGLIILATATPDQTFPASATMVQAALGIGDCVAFDVQAVCSGFLYALSVADSMIRGGSATHALVIGAETFSRILDWEDRTTCVLFGDGAGAVVLKAEEGGDRGVLATRLHADGRHNQLLYVDGGPSTTQTVGKLRMKGQEVFRHAVTNLAQVLREVMGDAGLTVDDIDWVVPHQANRRILDATARKLGLPAERVIVTVDQHANTSAASVPLALDVAVRDGRIKPGDLLVLEAMGGGFTWGAAAIRY.

Residues cysteine 113 and histidine 246 contribute to the active site. The ACP-binding stretch occupies residues 247–251 (QANRR). Asparagine 276 is an active-site residue.

Belongs to the thiolase-like superfamily. FabH family. Homodimer.

The protein resides in the cytoplasm. It catalyses the reaction malonyl-[ACP] + acetyl-CoA + H(+) = 3-oxobutanoyl-[ACP] + CO2 + CoA. It functions in the pathway lipid metabolism; fatty acid biosynthesis. Its function is as follows. Catalyzes the condensation reaction of fatty acid synthesis by the addition to an acyl acceptor of two carbons from malonyl-ACP. Catalyzes the first condensation reaction which initiates fatty acid synthesis and may therefore play a role in governing the total rate of fatty acid production. Possesses both acetoacetyl-ACP synthase and acetyl transacylase activities. Its substrate specificity determines the biosynthesis of branched-chain and/or straight-chain of fatty acids. This Rhizorhabdus wittichii (strain DSM 6014 / CCUG 31198 / JCM 15750 / NBRC 105917 / EY 4224 / RW1) (Sphingomonas wittichii) protein is Beta-ketoacyl-[acyl-carrier-protein] synthase III.